The sequence spans 329 residues: Serpentine receptor class alpha-2 (329 aa).

7 helical membrane-spanning segments follow: residues 25–45 (FVYLLAIILTFITTYFAVKIL), 57–77 (ILLVQNLFYANLYQFFHGIEA), 104–124 (YYKIILMGSSGMVYGQTGLLI), 144–164 (CAVISILVLICSSSTGRLIVW), 188–208 (HYFTMCAVLSTINFCISTFIL), 240–260 (FLTVSQFVAVFLNSFGMIVLV), and 273–293 (LLVVWLYAFPIVVLMFPVILV).

Belongs to the nematode receptor-like protein sra family.

It is found in the membrane. This is Serpentine receptor class alpha-2 (sra-2) from Caenorhabditis elegans.